The sequence spans 470 residues: Acetyl-CoA decarbonylase/synthase complex subunit gamma (470 aa).

Residues 1–62 (MKVKSPLEVY…DPKVKKKLEE (62 aa)) form the 4Fe-4S domain. Residues cysteine 18, cysteine 21, cysteine 26, and cysteine 43 each contribute to the [4Fe-4S] cluster site.

As to quaternary structure, heterodimer of delta and gamma chains. The ACDS complex is made up of alpha, epsilon, beta, gamma and delta chains with a probable stoichiometry of (alpha(2)epsilon(2))(4)-beta(8)-(gamma(1)delta(1))(8). Corrinoid is required as a cofactor. The cofactor is [4Fe-4S] cluster.

The enzyme catalyses 5,6,7,8-tetrahydrosarcinapterin + methyl-Co(III)-[corrinoid Fe-S protein] = 5-methyltetrahydrosarcinapterin + Co(I)-[corrinoid Fe-S protein] + H(+). In terms of biological role, part of a complex that catalyzes the reversible cleavage of acetyl-CoA, allowing autotrophic growth from CO(2). This Archaeoglobus fulgidus (strain ATCC 49558 / DSM 4304 / JCM 9628 / NBRC 100126 / VC-16) protein is Acetyl-CoA decarbonylase/synthase complex subunit gamma.